The sequence spans 336 residues: Large ribosomal subunit protein uL10 (336 aa).

Residues 292 to 336 (LKEKLSSRAAAPAPEEKEEEVEEEAEEEEEEEEEDAAAGLGALFG) are disordered. Residues 307–327 (EKEEEVEEEAEEEEEEEEEDA) show a composition bias toward acidic residues.

The protein belongs to the universal ribosomal protein uL10 family. As to quaternary structure, part of the 50S ribosomal subunit. Forms part of the ribosomal stalk which helps the ribosome interact with GTP-bound translation factors. Forms a heptameric L10(L12)2(L12)2(L12)2 complex, where L10 forms an elongated spine to which the L12 dimers bind in a sequential fashion.

In terms of biological role, forms part of the ribosomal stalk, playing a central role in the interaction of the ribosome with GTP-bound translation factors. This Methanothermobacter thermautotrophicus (strain ATCC 29096 / DSM 1053 / JCM 10044 / NBRC 100330 / Delta H) (Methanobacterium thermoautotrophicum) protein is Large ribosomal subunit protein uL10.